A 510-amino-acid chain; its full sequence is 2,3-bisphosphoglycerate-independent phosphoglycerate mutase (510 aa).

Mn(2+) contacts are provided by D10 and S60. S60 serves as the catalytic Phosphoserine intermediate. Substrate contacts are provided by residues H121, 150-151 (RD), R182, R188, 252-255 (RPDR), and K325. The Mn(2+) site is built by D392, H396, D433, H434, and H451.

Belongs to the BPG-independent phosphoglycerate mutase family. Requires Mn(2+) as cofactor.

The protein localises to the plastid. Its subcellular location is the chloroplast. The enzyme catalyses (2R)-2-phosphoglycerate = (2R)-3-phosphoglycerate. Its pathway is carbohydrate degradation; glycolysis; pyruvate from D-glyceraldehyde 3-phosphate: step 3/5. Functionally, catalyzes the interconversion of 2-phosphoglycerate and 3-phosphoglycerate. The sequence is that of 2,3-bisphosphoglycerate-independent phosphoglycerate mutase from Gracilaria tenuistipitata var. liui (Red alga).